Consider the following 524-residue polypeptide: Tyrosine-protein kinase HCK (524 aa).

2 disordered regions span residues 1-20 (MGGR…GRVP) and 35-71 (KASK…LPPG). Residue Gly-2 is the site of N-myristoyl glycine attachment. Gly-3 carries the S-palmitoyl cysteine lipid modification. A Phosphotyrosine; by autocatalysis modification is found at Tyr-50. Residues 76 to 136 (SEDTIVVALY…PSNYVARVNS (61 aa)) form the SH3 domain. Residues 142–239 (WFFKGISRKD…GLCQKLSVPC (98 aa)) form the SH2 domain. A Phosphothreonine modification is found at Thr-200. Residue Tyr-207 is modified to Phosphotyrosine. The 254-residue stretch at 260–513 (LQMEKKLGAG…YIQSVLDDFY (254 aa)) folds into the Protein kinase domain. Residues 266-274 (LGAGQFGEV) and Lys-288 contribute to the ATP site. Catalysis depends on Asp-379, which acts as the Proton acceptor. The residue at position 409 (Tyr-409) is a Phosphotyrosine; by autocatalysis. Ser-460 is modified (phosphoserine). Tyr-520 bears the Phosphotyrosine mark.

This sequence belongs to the protein kinase superfamily. Tyr protein kinase family. SRC subfamily. As to quaternary structure, interacts with ADAM15. Interacts with FASLG. Interacts with ARRB1 and ARRB2. Interacts with FCGR1A; the interaction may be indirect. Interacts with IL6ST. Interacts (via SH3 domain) with ELMO1. Interacts (via SH3 domain) with TP73. Interacts with YAP1. Interacts with ABL1 and ITGB1, and thereby recruits ABL1 to activated ITGB1. Interacts (via SH2 domain) with FLT3 (tyrosine phosphorylated). Interacts with CBL. Interacts with VAV1, WAS and RAPGEF1. Interacts (via SH3 domain) with WDCP. Post-translationally, phosphorylated on several tyrosine residues. Autophosphorylated. Becomes rapidly phosphorylated upon activation of the immunoglobulin receptors FCGR1A and FCGR2A. Phosphorylation at Tyr-409 increases kinase activity. Phosphorylation at Tyr-520 inhibits kinase activity. Kinase activity is not required for phosphorylation at Tyr-520, suggesting that this site may be a target of other kinases. In terms of processing, ubiquitinated by CBL, leading to its degradation via the proteasome. Isoform 2 palmitoylation at position 2 requires prior myristoylation. Palmitoylation at position 3 is required for caveolar localization of isoform 2. In terms of tissue distribution, expressed strongly in spleen and at very low levels in thymus.

Its subcellular location is the cytoplasmic vesicle. The protein resides in the secretory vesicle. The protein localises to the cytoplasm. It is found in the cytosol. It localises to the membrane. Its subcellular location is the caveola. The protein resides in the lysosome. The protein localises to the cell projection. It is found in the podosome membrane. It localises to the cell membrane. Its subcellular location is the cell junction. The protein resides in the focal adhesion. The protein localises to the cytoskeleton. It is found in the golgi apparatus. It localises to the nucleus. It catalyses the reaction L-tyrosyl-[protein] + ATP = O-phospho-L-tyrosyl-[protein] + ADP + H(+). Its activity is regulated as follows. Subject to autoinhibition, mediated by intramolecular interactions involving the SH2 and SH3 domains. Kinase activity is also regulated by phosphorylation at regulatory tyrosine residues. Phosphorylation at Tyr-409 is required for optimal activity. Phosphorylation at Tyr-520 inhibits kinase activity. In terms of biological role, non-receptor tyrosine-protein kinase found in hematopoietic cells that transmits signals from cell surface receptors and plays an important role in the regulation of innate immune responses, including neutrophil, monocyte, macrophage and mast cell functions, phagocytosis, cell survival and proliferation, cell adhesion and migration. Acts downstream of receptors that bind the Fc region of immunoglobulins, such as FCGR1A and FCGR2A, but also CSF3R, PLAUR, the receptors for IFNG, IL2, IL6 and IL8, and integrins, such as ITGB1 and ITGB2. During the phagocytic process, mediates mobilization of secretory lysosomes, degranulation, and activation of NADPH oxidase to bring about the respiratory burst. Plays a role in the release of inflammatory molecules. Promotes reorganization of the actin cytoskeleton and actin polymerization, formation of podosomes and cell protrusions. Inhibits TP73-mediated transcription activation and TP73-mediated apoptosis. Phosphorylates CBL in response to activation of immunoglobulin gamma Fc region receptors. Phosphorylates ADAM15, BCR, ELMO1, FCGR2A, GAB1, GAB2, RAPGEF1, STAT5B, TP73, VAV1 and WAS. This Rattus norvegicus (Rat) protein is Tyrosine-protein kinase HCK (Hck).